An 879-amino-acid polypeptide reads, in one-letter code: Beta-mannosidase (879 aa).

Residues 1–17 (MLLRLLLLLAPCGAGFA) form the signal peptide. Residues N35 and N77 are each glycosylated (N-linked (GlcNAc...) asparagine). C167 and C176 are oxidised to a cystine. 190–192 (WDW) contacts substrate. The N-linked (GlcNAc...) asparagine glycan is linked to N297. N456 is a binding site for substrate. The active-site Proton donor is the E457. 3 disulfide bridges follow: C540–C629, C732–C761, and C764–C769. Residue E554 is the Nucleophile of the active site. N803 carries an N-linked (GlcNAc...) asparagine glycan.

It belongs to the glycosyl hydrolase 2 family. In terms of assembly, monomer. In terms of processing, N-glycosylated. In terms of tissue distribution, detected in kidney (at protein level). Found in spleen and to a lesser extent in liver. Not detected in kidney or brain.

It localises to the lysosome. It carries out the reaction Hydrolysis of terminal, non-reducing beta-D-mannose residues in beta-D-mannosides.. It functions in the pathway glycan metabolism; N-glycan degradation. In terms of biological role, exoglycosidase that cleaves the single beta-linked mannose residue from the non-reducing end of all N-linked glycoprotein oligosaccharides. In Capra hircus (Goat), this protein is Beta-mannosidase (MANBA).